The following is a 433-amino-acid chain: Ribonuclease T2-like (433 aa).

Disulfide bonds link C28–C47, C36–C95, C46–C171, and C103–C163. Residues N38 and N71 are each glycosylated (N-linked (GlcNAc...) asparagine). Catalysis depends on residues H88, E156, and H160. N-linked (GlcNAc...) asparagine glycans are attached at residues N221 and N263. The cysteines at positions 247 and 283 are disulfide-linked.

Belongs to the RNase T2 family.

The protein resides in the vacuole lumen. Its subcellular location is the cytoplasm. The catalysed reaction is a ribonucleotidyl-ribonucleotide-RNA + H2O = a 3'-end 3'-phospho-ribonucleotide-RNA + a 5'-end dephospho-ribonucleoside-RNA + H(+). In terms of biological role, rnase which modulates cell survival under stress conditions. Released from the vacuole to the cytoplasm during stress to promote tRNA and rRNA cleavage and to activate separately a downstream pathway that promotes cell death. Involved in cell size, vacuolar morphology and growth at high temperatures and high salt concentration. The sequence is that of Ribonuclease T2-like (RNY1) from Candida glabrata (strain ATCC 2001 / BCRC 20586 / JCM 3761 / NBRC 0622 / NRRL Y-65 / CBS 138) (Yeast).